The primary structure comprises 341 residues: Geranylfarnesyl diphosphate synthase (341 aa).

Residues Lys47, Arg50, and Gln95 each contribute to the isopentenyl diphosphate site. Mg(2+) contacts are provided by Asp102 and Asp106. Arg111 contacts an all-trans-polyprenyl diphosphate. Arg112 contributes to the isopentenyl diphosphate binding site. An all-trans-polyprenyl diphosphate contacts are provided by Lys193, Thr194, and Gln231.

It belongs to the FPP/GGPP synthase family. In terms of assembly, homodimer. Requires Mg(2+) as cofactor.

The protein resides in the cytoplasm. The enzyme catalyses isopentenyl diphosphate + (2E,6E,10E)-geranylgeranyl diphosphate = (2E,6E,10E,14E)-geranylfarnesyl diphosphate + diphosphate. In terms of biological role, probably involved in biosynthesis of the precursor for C25 (sesterterpanyl chain) moiety of C20-C25 diether (2-O-sesterterpanyl-3-O-phytanyl-sn-glycer) membrane lipid. Catalyzes the condensation of isopentenyl pyrophosphate with the allylic pyrophosphates to yield geranylfarnesyl diphosphate (GFPP). Geranylgeranyl diphosphate (GGPP) is the preferred substrate, but dimethylallyl diphosphate (DMAPP) and farnesyl diphosphate (FPP) can also be used as allylic substrate. The protein is Geranylfarnesyl diphosphate synthase (idsA3) of Natronomonas pharaonis (strain ATCC 35678 / DSM 2160 / CIP 103997 / JCM 8858 / NBRC 14720 / NCIMB 2260 / Gabara) (Halobacterium pharaonis).